The chain runs to 326 residues: Pyruvate dehydrogenase E1 component subunit beta (326 aa).

Residue Glu60 coordinates thiamine diphosphate. K(+) is bound by residues Ile113, Ala161, Ile162, and Asn166.

As to quaternary structure, heterodimer of an alpha and a beta chain. It depends on thiamine diphosphate as a cofactor.

Its subcellular location is the plastid. The protein localises to the chloroplast. It catalyses the reaction N(6)-[(R)-lipoyl]-L-lysyl-[protein] + pyruvate + H(+) = N(6)-[(R)-S(8)-acetyldihydrolipoyl]-L-lysyl-[protein] + CO2. The pyruvate dehydrogenase complex catalyzes the overall conversion of pyruvate to acetyl-CoA and CO(2). It contains multiple copies of three enzymatic components: pyruvate dehydrogenase (E1), dihydrolipoamide acetyltransferase (E2) and lipoamide dehydrogenase (E3). The chain is Pyruvate dehydrogenase E1 component subunit beta (pdhB) from Chaetosphaeridium globosum (Charophycean green alga).